The primary structure comprises 804 residues: uncharacterized protein (804 aa).

This is an uncharacterized protein from Methanothermobacter marburgensis (strain ATCC BAA-927 / DSM 2133 / JCM 14651 / NBRC 100331 / OCM 82 / Marburg) (Methanobacterium thermoautotrophicum).